The sequence spans 575 residues: DNA-directed RNA polymerase subunit beta' (575 aa).

Positions 64, 66, 85, and 88 each coordinate Zn(2+). The Mg(2+) site is built by D440, D442, and D444.

This sequence belongs to the RNA polymerase beta' chain family. RpoC1 subfamily. As to quaternary structure, in plastids the minimal PEP RNA polymerase catalytic core is composed of four subunits: alpha, beta, beta', and beta''. When a (nuclear-encoded) sigma factor is associated with the core the holoenzyme is formed, which can initiate transcription. It depends on Mg(2+) as a cofactor. Zn(2+) serves as cofactor.

It localises to the plastid. The enzyme catalyses RNA(n) + a ribonucleoside 5'-triphosphate = RNA(n+1) + diphosphate. In terms of biological role, DNA-dependent RNA polymerase catalyzes the transcription of DNA into RNA using the four ribonucleoside triphosphates as substrates. The polypeptide is DNA-directed RNA polymerase subunit beta' (Euglena longa (Euglenophycean alga)).